A 345-amino-acid polypeptide reads, in one-letter code: NADH-quinone oxidoreductase subunit H (345 aa).

Transmembrane regions (helical) follow at residues V13–L33, F84–F104, V115–G135, I161–V181, L190–L210, Y248–S268, P277–I297, and L309–A329.

It belongs to the complex I subunit 1 family. NDH-1 is composed of 14 different subunits. Subunits NuoA, H, J, K, L, M, N constitute the membrane sector of the complex.

It is found in the cell inner membrane. The catalysed reaction is a quinone + NADH + 5 H(+)(in) = a quinol + NAD(+) + 4 H(+)(out). Its function is as follows. NDH-1 shuttles electrons from NADH, via FMN and iron-sulfur (Fe-S) centers, to quinones in the respiratory chain. The immediate electron acceptor for the enzyme in this species is believed to be ubiquinone. Couples the redox reaction to proton translocation (for every two electrons transferred, four hydrogen ions are translocated across the cytoplasmic membrane), and thus conserves the redox energy in a proton gradient. This subunit may bind ubiquinone. This Ruegeria sp. (strain TM1040) (Silicibacter sp.) protein is NADH-quinone oxidoreductase subunit H.